The sequence spans 254 residues: 4-hydroxy-tetrahydrodipicolinate reductase (254 aa).

Position 7-12 (7-12) interacts with NAD(+); that stretch reads GASGRI. Position 35 (arginine 35) interacts with NADP(+). NAD(+) contacts are provided by residues 91-93 and 115-118; these read GTT and AHNM. Residue histidine 147 is the Proton donor/acceptor of the active site. Histidine 148 lines the (S)-2,3,4,5-tetrahydrodipicolinate pocket. Residue lysine 151 is the Proton donor of the active site. 157 to 158 contacts (S)-2,3,4,5-tetrahydrodipicolinate; sequence GT.

The protein belongs to the DapB family.

The protein localises to the cytoplasm. The enzyme catalyses (S)-2,3,4,5-tetrahydrodipicolinate + NAD(+) + H2O = (2S,4S)-4-hydroxy-2,3,4,5-tetrahydrodipicolinate + NADH + H(+). The catalysed reaction is (S)-2,3,4,5-tetrahydrodipicolinate + NADP(+) + H2O = (2S,4S)-4-hydroxy-2,3,4,5-tetrahydrodipicolinate + NADPH + H(+). The protein operates within amino-acid biosynthesis; L-lysine biosynthesis via DAP pathway; (S)-tetrahydrodipicolinate from L-aspartate: step 4/4. Catalyzes the conversion of 4-hydroxy-tetrahydrodipicolinate (HTPA) to tetrahydrodipicolinate. In Helicobacter pylori (strain G27), this protein is 4-hydroxy-tetrahydrodipicolinate reductase.